The following is a 317-amino-acid chain: Small ribosomal subunit protein uS2 (317 aa).

Residue Ser2 is modified to N-acetylserine. 2 laminin-binding regions span residues 161–180 (IPCN…MLSR) and 205–229 (RDPE…EFQG). [DE]-W-[ST] repeat units lie at residues 230-232 (EWT) and 245-247 (DWS). The laminin-binding stretch occupies residues 242–317 (EVADWSEGVA…EWGGASADWS (76 aa)). Over residues 271 to 284 (EAAAPSKAPAAAEG) the composition is skewed to low complexity. Positions 271 to 317 (EAAAPSKAPAAAEGFAEDWSAQPATEDWSAAPTAQATEWGGASADWS) are disordered. [DE]-W-[ST] repeat units lie at residues 288-290 (DWS), 297-299 (DWS), and 315-317 (DWS).

This sequence belongs to the universal ribosomal protein uS2 family. In terms of assembly, monomer (37LRP) and homodimer (67LR). Component of the small ribosomal subunit. Mature ribosomes consist of a small (40S) and a large (60S) subunit. The 40S subunit contains about 33 different proteins and 1 molecule of RNA (18S). The 60S subunit contains about 49 different proteins and 3 molecules of RNA (28S, 5.8S and 5S). Interacts with rps21. Interacts with several laminins including at least lamb1. Interacts with mdk. Post-translationally, acylated. Acylation may be a prerequisite for conversion of the monomeric 37 kDa laminin receptor precursor (37LRP) to the mature dimeric 67 kDa laminin receptor (67LR), and may provide a mechanism for membrane association. In terms of processing, cleaved by stromelysin-3 (ST3) at the cell surface. Cleavage by stromelysin-3 may be a mechanism to alter cell-extracellular matrix interactions.

It localises to the cell membrane. The protein resides in the cytoplasm. The protein localises to the nucleus. Its function is as follows. Required for the assembly and/or stability of the 40S ribosomal subunit. Required for the processing of the 20S rRNA-precursor to mature 18S rRNA in a late step of the maturation of 40S ribosomal subunits. Also functions as a cell surface receptor for laminin. Plays a role in cell adhesion to the basement membrane and in the consequent activation of signaling transduction pathways. May play a role in cell fate determination and tissue morphogenesis. The protein is Small ribosomal subunit protein uS2 (rpsa) of Salmo salar (Atlantic salmon).